Consider the following 322-residue polypeptide: ATP-dependent 6-phosphofructokinase (322 aa).

Residues glycine 12, 73–74, and 103–106 each bind ATP; these read RF and GDGT. Aspartate 104 contacts Mg(2+). 126 to 128 provides a ligand contact to substrate; that stretch reads TID. Aspartate 128 serves as the catalytic Proton acceptor. Residue arginine 155 coordinates ADP. Substrate-binding positions include arginine 163 and 170-172; that span reads MGR. ADP is bound by residues 186–188, lysine 212, and 214–216; these read GSE and KPS. Substrate contacts are provided by residues glutamate 223, arginine 245, and 251–254; that span reads HTQR.

The protein belongs to the phosphofructokinase type A (PFKA) family. ATP-dependent PFK group I subfamily. Prokaryotic clade 'B1' sub-subfamily. As to quaternary structure, homotetramer. Mg(2+) is required as a cofactor.

It is found in the cytoplasm. It carries out the reaction beta-D-fructose 6-phosphate + ATP = beta-D-fructose 1,6-bisphosphate + ADP + H(+). It participates in carbohydrate degradation; glycolysis; D-glyceraldehyde 3-phosphate and glycerone phosphate from D-glucose: step 3/4. Allosterically activated by ADP and other diphosphonucleosides, and allosterically inhibited by phosphoenolpyruvate. In terms of biological role, catalyzes the phosphorylation of D-fructose 6-phosphate to fructose 1,6-bisphosphate by ATP, the first committing step of glycolysis. The sequence is that of ATP-dependent 6-phosphofructokinase from Mesomycoplasma hyopneumoniae (strain 232) (Mycoplasma hyopneumoniae).